Reading from the N-terminus, the 189-residue chain is MKTGKELKPGTVIRLENDPWLVQKAEFTKSGRNSAIMKTKLKNLLTGYKTEIVYSADDKLDDVILDRKEATLSFISGDTYTFMDTTDYTMYELNAEDIESVLPFVEEGMTDVCEAVFFEDRLVSVELPTTIVRQVDYTEGSARGDTSGKVMKPAKLKNGTELSVADFIEIGDMIEIDTREGGSYKGRAK.

This sequence belongs to the elongation factor P family.

It localises to the cytoplasm. Its pathway is protein biosynthesis; polypeptide chain elongation. Involved in peptide bond synthesis. Stimulates efficient translation and peptide-bond synthesis on native or reconstituted 70S ribosomes in vitro. Probably functions indirectly by altering the affinity of the ribosome for aminoacyl-tRNA, thus increasing their reactivity as acceptors for peptidyl transferase. This Pseudomonas savastanoi pv. phaseolicola (strain 1448A / Race 6) (Pseudomonas syringae pv. phaseolicola (strain 1448A / Race 6)) protein is Elongation factor P.